The primary structure comprises 133 residues: Transcription antitermination protein NusB (133 aa).

This sequence belongs to the NusB family.

Functionally, involved in transcription antitermination. Required for transcription of ribosomal RNA (rRNA) genes. Binds specifically to the boxA antiterminator sequence of the ribosomal RNA (rrn) operons. The polypeptide is Transcription antitermination protein NusB (Shewanella denitrificans (strain OS217 / ATCC BAA-1090 / DSM 15013)).